Here is a 654-residue protein sequence, read N- to C-terminus: MFLPRLVRYRTERFIKMVPTRTLRRINHSSRDPIQKQVLALIKANANLNDNDKLKIRKYWSDMADYKSLRKQENSLLESSILHEVKIEDFISFINRTKTSSMTTRGIYRRECLYQCKKNLDLVNQVVSQVSSVRHQKPLTTQLDTMRWCVDDAIGTGDIVMAADLFLLYYRLFTDDKKLDEQYAKKIISVLAYPNPLHDHVHLVKYLQLNSLFESITGGGIKLTRFQLETLSNKALGLSNEAPQLCKAILNKLMNINYSLTNDLKLRDDQVLLAYKSIDENYRRGNVASVYSIWNKIKEHYVSISAHDSRIIYKVFKICTHNRAYRSICSEMFWQLTPEYYCNNPLILPAIIDFITKQDSLTMAKELMQNINRYTLPENHHIVWLNKRCLSSLLRMHLKFNDSNGVDRVLKQITTNFRALSQENYQAIIIHLFKTQNLDHIAKAVKLLDTIPPGQAMLAYGSIINEVVDWKLASKVKFTDNLMALVNDLLTKAHDFDPDHRNSLWNVVSALYIKKLCHYKKRDGKFVANAKKDIDLAKLLYINAAKRSKTYWTKSNCNPFIASSPCDVKLKVNNQNRFTILRNIALSALQIGRTDIFLWACAELYQNGMTIEELKLDWNFILKHQIRNSEFKTNKEIIQDIKKHGVSAVKRYLR.

The protein resides in the mitochondrion. Its function is as follows. Responsible for conferring a stable 5'-end on cytochrome b mRNA. The protein is Cytochrome B pre-mRNA-processing protein 1 (CBP1) of Saccharomyces cerevisiae (strain ATCC 204508 / S288c) (Baker's yeast).